The chain runs to 111 residues: uncharacterized protein (111 aa).

Helical transmembrane passes span 22-42 (ASLICLHTLSLVSFSFLANIT), 48-68 (LTPAGIIESIPVVFTAVVSVL), and 75-95 (VLVTVSVVLFKISLGAIPKIL).

It localises to the membrane. This is an uncharacterized protein from Saccharomyces cerevisiae (strain ATCC 204508 / S288c) (Baker's yeast).